A 475-amino-acid polypeptide reads, in one-letter code: Gamma-aminobutyric acid receptor subunit gamma-2 (475 aa).

A signal peptide spans 1–39; it reads MSSPNIWSTGSSVYSTPVFSQKMTLWILLLLSLYPGLTR. The Extracellular portion of the chain corresponds to 41-275; it reads KSDDDYEDYA…FDLSRRMGYF (235 aa). Residues asparagine 52 and asparagine 129 are each glycosylated (N-linked (GlcNAc...) asparagine). Cysteine 190 and cysteine 204 form a disulfide bridge. N-linked (GlcNAc...) asparagine glycosylation occurs at asparagine 247. A helical transmembrane segment spans residues 276–296; it reads TIQTYIPCTLIVVLSWVSFWI. The Cytoplasmic portion of the chain corresponds to 297 to 302; it reads NKDAVP. A helical transmembrane segment spans residues 303–322; that stretch reads ARTSLGITTVLTMTTLSTIA. Topologically, residues 323 to 334 are extracellular; it reads RKSLPKVSYVTA. A helical membrane pass occupies residues 335-359; that stretch reads MDLFVSVCFIFVFSALVEYGTLHYF. Over 360 to 451 the chain is Cytoplasmic; that stretch reads VSNRKPSKDK…IHIRIAKMDS (92 aa). Serine 382 carries the phosphoserine; by PKC modification. A helical membrane pass occupies residues 452 to 472; that stretch reads YARIFFPTAFCLFNLVYWVSY. The Extracellular portion of the chain corresponds to 473–475; it reads LYL.

It belongs to the ligand-gated ion channel (TC 1.A.9) family. Gamma-aminobutyric acid receptor (TC 1.A.9.5) subfamily. GABRG2 sub-subfamily. As to quaternary structure, heteropentamer, formed by a combination of alpha (GABRA1-6), beta (GABRB1-3), gamma (GABRG1-3), delta (GABRD), epsilon (GABRE), rho (GABRR1-3), pi (GABRP) and theta (GABRQ) chains, each subunit exhibiting distinct physiological and pharmacological properties. Interacts with GABARAP. Interacts with KIF21B. Identified in a complex of 720 kDa composed of LHFPL4, NLGN2, GABRA1, GABRB2, GABRG2 and GABRB3. Interacts with LHFPL4. Interacts with SHISA7; interaction leads to the regulation of GABA(A) receptor trafficking, channel deactivation kinetics and pharmacology. In terms of processing, palmitoylated by ZDHHC3/GODZ; required for the accumulation of GABA(A) receptors at the postsynaptic membrane of inhibitory GABAergic synapses. Glycosylated.

Its subcellular location is the postsynaptic cell membrane. The protein resides in the cell membrane. It localises to the cell projection. The protein localises to the dendrite. It is found in the cytoplasmic vesicle membrane. It catalyses the reaction chloride(in) = chloride(out). Its activity is regulated as follows. Allosterically activated by benzodiazepines. Activated by pentobarbital. Inhibited by the antagonist bicuculline. Inhibited by zinc ions. Potentiated by histamine. Functionally, gamma subunit of the heteropentameric ligand-gated chloride channel gated by gamma-aminobutyric acid (GABA), a major inhibitory neurotransmitter in the brain. GABA-gated chloride channels, also named GABA(A) receptors (GABAAR), consist of five subunits arranged around a central pore and contain GABA active binding site(s) located at the alpha and beta subunit interface(s). When activated by GABA, GABAARs selectively allow the flow of chloride anions across the cell membrane down their electrochemical gradient. Gamma-2/GABRG2-containing GABAARs are found at both synaptic and extrasynaptic sites. Chloride influx into the postsynaptic neuron following GABAAR opening decreases the neuron ability to generate a new action potential, thereby reducing nerve transmission. GABAARs containing alpha-1 and beta-2 or -3 subunits exhibit synaptogenic activity; the gamma-2 subunit being necessary but not sufficient to induce rapid synaptic contacts formation. Extrasynaptic gamma-2-containing receptors contribute to the tonic GABAergic inhibition. GABAARs function also as histamine receptor where histamine binds at the interface of two neighboring beta subunits and potentiates GABA response in a gamma-2 subunit-controlled manner. This chain is Gamma-aminobutyric acid receptor subunit gamma-2 (GABRG2), found in Bos taurus (Bovine).